A 920-amino-acid chain; its full sequence is Bifunctional aspartokinase/homoserine dehydrogenase 1, chloroplastic (920 aa).

Residues 1–21 (MRSLTVASRHPGAAFSTRRRP) are disordered. Residues 1-92 (MRSLTVASRH…EAIADLPKGD (92 aa)) constitute a chloroplast transit peptide. Residues 93 to 341 (MWSVHKFGGT…VSEAVILSTL (249 aa)) are aspartokinase. The tract at residues 342–566 (SYQEAWEMSY…LSKTTLAVGI (225 aa)) is interface. 2 consecutive ACT domains span residues 416–491 (VEGT…VIHN) and 497–574 (TVGL…LIGR). Residues 567–920 (IGPGLIGRTL…RLSSYLGAPS (354 aa)) are homoserine dehydrogenase. The NAD(+) site is built by Ile572 and Ala601. Ile572 is an NADP(+) binding site. Ile572 is an NADPH binding site. Arg604, Thr653, and Lys677 together coordinate NADP(+). Thr653 contacts NAD(+). Residues Thr653 and Lys677 each contribute to the NADPH site. Positions 704, 707, 709, and 711 each coordinate Na(+). Gly762 and Glu765 together coordinate NADP(+). Residues Glu765 and Asp776 each coordinate L-homoserine. The active-site Proton donor is the Lys780. Gly897 contributes to the NAD(+) binding site. Gly897 contacts NADP(+). Residue Gly897 participates in NADPH binding.

The protein in the N-terminal section; belongs to the aspartokinase family. In the C-terminal section; belongs to the homoserine dehydrogenase family. In terms of assembly, homo- or heterodimer. The cofactor is a metal cation.

It localises to the plastid. The protein resides in the chloroplast. It carries out the reaction L-homoserine + NADP(+) = L-aspartate 4-semialdehyde + NADPH + H(+). The enzyme catalyses L-homoserine + NAD(+) = L-aspartate 4-semialdehyde + NADH + H(+). It catalyses the reaction L-aspartate + ATP = 4-phospho-L-aspartate + ADP. The protein operates within amino-acid biosynthesis; L-lysine biosynthesis via DAP pathway; (S)-tetrahydrodipicolinate from L-aspartate: step 1/4. It functions in the pathway amino-acid biosynthesis; L-methionine biosynthesis via de novo pathway; L-homoserine from L-aspartate: step 1/3. Its pathway is amino-acid biosynthesis; L-methionine biosynthesis via de novo pathway; L-homoserine from L-aspartate: step 3/3. It participates in amino-acid biosynthesis; L-threonine biosynthesis; L-threonine from L-aspartate: step 1/5. The protein operates within amino-acid biosynthesis; L-threonine biosynthesis; L-threonine from L-aspartate: step 3/5. In terms of biological role, bifunctional aspartate kinase and homoserine dehydrogenase that catalyzes the first and the third steps toward the synthesis of lysine, methionine and threonine from aspartate. This is Bifunctional aspartokinase/homoserine dehydrogenase 1, chloroplastic (AKHSDH1) from Zea mays (Maize).